The chain runs to 85 residues: MGERYNIHSQLEHLQSKYIGTGHADTTKFEWLTNQHRDSLASYMGHYDILNYFAIAENESKARVRFNLMERMLQPCGPPPEKLED.

Belongs to the SF3B5 family. As to quaternary structure, component of the SF3B complex. SF3B complex associates with the splicing factor SF3A complex and a 12S RNA unit to form the U2 small nuclear ribonucleoproteins complex (U2 snRNP). Identified in the SAGA transcription regulatory histone acetylation (HAT) complex; the interaction is RNA-independent.

It is found in the nucleus. Its function is as follows. Involved in pre-mRNA splicing as component of spliceosome. As part of the spliceosome complex, plays a role in the regulation of spermatogonial differentiation. When associated with the SAGA transcription regulatory histone acetylation (HAT) complex, might be involved in the transcriptional activation of a subset of SAGA-regulated genes. The chain is Splicing factor 3B subunit 5 from Drosophila melanogaster (Fruit fly).